Here is a 579-residue protein sequence, read N- to C-terminus: Arginine--tRNA ligase (579 aa).

The short motif at 127–137 (PNLAKEMHVGH) is the 'HIGH' region element.

Belongs to the class-I aminoacyl-tRNA synthetase family. Monomer.

The protein resides in the cytoplasm. It carries out the reaction tRNA(Arg) + L-arginine + ATP = L-arginyl-tRNA(Arg) + AMP + diphosphate. The polypeptide is Arginine--tRNA ligase (Ectopseudomonas mendocina (strain ymp) (Pseudomonas mendocina)).